The following is a 2251-amino-acid chain: U3 small nucleolar RNA-associated protein 10 (2251 aa).

The HEAT repeat unit spans residues 945-983 (VVPLLLTALADAEAAIRLAAIACLAHILAICKYAGDLAK). 2 helical membrane-spanning segments follow: residues 962–982 (LAAI…GDLA) and 1460–1480 (LLVD…LLVD).

Belongs to the HEATR1/UTP10 family. As to quaternary structure, component of the ribosomal small subunit (SSU) processome.

The protein localises to the nucleus. The protein resides in the nucleolus. It localises to the membrane. In terms of biological role, involved in nucleolar processing of pre-18S ribosomal RNA. Involved in ribosome biosynthesis. This chain is U3 small nucleolar RNA-associated protein 10, found in Mycosarcoma maydis (Corn smut fungus).